A 227-amino-acid polypeptide reads, in one-letter code: Small ribosomal subunit protein uS3 (227 aa).

Residues 39-109 (IHRFFEKLTR…KIVINVDAVD (71 aa)) form the KH type-2 domain.

Belongs to the universal ribosomal protein uS3 family. Part of the 30S ribosomal subunit. Forms a tight complex with proteins S10 and S14.

Binds the lower part of the 30S subunit head. Binds mRNA in the 70S ribosome, positioning it for translation. This is Small ribosomal subunit protein uS3 from Mesomycoplasma hyopneumoniae (strain 232) (Mycoplasma hyopneumoniae).